A 184-amino-acid polypeptide reads, in one-letter code: Ribosome-recycling factor (184 aa).

This sequence belongs to the RRF family.

The protein localises to the cytoplasm. In terms of biological role, responsible for the release of ribosomes from messenger RNA at the termination of protein biosynthesis. May increase the efficiency of translation by recycling ribosomes from one round of translation to another. The sequence is that of Ribosome-recycling factor from Oleidesulfovibrio alaskensis (strain ATCC BAA-1058 / DSM 17464 / G20) (Desulfovibrio alaskensis).